Consider the following 902-residue polypeptide: Chitin synthase 3 (902 aa).

The segment covering 1–15 has biased composition (basic and acidic residues); that stretch reads MAYNRLDDDYFDNRR. Residues 1 to 68 are disordered; that stretch reads MAYNRLDDDY…MGPGRHTPSD (68 aa). Positions 19 to 30 are enriched in pro residues; it reads NRPPPHRTPSPG. A glycan (N-linked (GlcNAc...) asparagine) is linked at Asn80. The disordered stretch occupies residues 104–161; sequence HHDAYYNPTYTPTPNEAQTPYGEPGYEHDGRPLLPQQDSYGQYSDNPQQQQQQQGGLK. Composition is skewed to polar residues over residues 111–121 and 139–150; these read PTYTPTPNEAQ and QQDSYGQYSDNP. 9 helical membrane passes run 449–469, 547–567, 577–597, 623–643, 656–676, 699–719, 731–751, 830–850, and 874–894; these read SAFG…YIAL, RWLN…YQFF, IAFF…WFAI, ILGV…FVLA, LAMI…AVFI, VVVT…VASL, LVQY…YAFC, VVVL…LSTA, and VVLY…MWFL.

It belongs to the chitin synthase family. Class II subfamily.

The protein localises to the cell membrane. It carries out the reaction [(1-&gt;4)-N-acetyl-beta-D-glucosaminyl](n) + UDP-N-acetyl-alpha-D-glucosamine = [(1-&gt;4)-N-acetyl-beta-D-glucosaminyl](n+1) + UDP + H(+). Its function is as follows. Polymerizes chitin, a structural polymer of the cell wall and septum, by transferring the sugar moiety of UDP-GlcNAc to the non-reducing end of the growing chitin polymer. CHS1 and CHS3 have compensatory functions in cell wall modifications in responses to stresses. Might function as a negative regulator on expression of other CHS genes. The polypeptide is Chitin synthase 3 (Pyricularia oryzae (strain 70-15 / ATCC MYA-4617 / FGSC 8958) (Rice blast fungus)).